The primary structure comprises 421 residues: CinA-like protein (421 aa).

Belongs to the CinA family.

In Synechococcus sp. (strain ATCC 27144 / PCC 6301 / SAUG 1402/1) (Anacystis nidulans), this protein is CinA-like protein.